The primary structure comprises 533 residues: Calcineurin-interacting protein 3 (533 aa).

3 disordered regions span residues 1–30, 53–85, and 359–404; these read MRSLKRENSGSALSVRSSDSEGDSYHNMDI, PRKQRSCHKRAEPVSEEHRKKESSKNSREYTKR, and MDMS…LTLP. The span at 61-85 shows a compositional bias: basic and acidic residues; it reads KRAEPVSEEHRKKESSKNSREYTKR. A compositionally biased stretch (polar residues) spans 359 to 372; sequence MDMSQTLSPEQTLS. Residues 373–384 are compositionally biased toward basic and acidic residues; the sequence is PREKLQVQDRKI.

Its subcellular location is the nucleus. This chain is Calcineurin-interacting protein 3, found in Caenorhabditis elegans.